The primary structure comprises 983 residues: Kinesin-like protein KIN-14I (983 aa).

The 123-residue stretch at 44-166 (ASRRYEAANW…CVLAIKSYDE (123 aa)) folds into the Calponin-homology (CH) domain. Composition is skewed to polar residues over residues 203-214 (SLSRTSSINNEK) and 278-287 (ESTSSQNNRS). Disordered regions lie at residues 203-227 (SLSR…LSSP) and 276-295 (PRES…LGER). One can recognise a Kinesin motor domain in the interval 399–724 (SIRVYCRVRP…LKFAERVATV (326 aa)). 481–488 (GQTGSGKT) is an ATP binding site. Positions 731–758 (VNNDTSDVKELKEQIATLKAALARKEAE) form a coiled coil. Disordered regions lie at residues 802–824 (TVNS…DDRS) and 921–983 (TRSN…NARH). Residues 939–951 (SPQSRNNSNNTVS) show a composition bias toward polar residues.

This sequence belongs to the TRAFAC class myosin-kinesin ATPase superfamily. Kinesin family. KIN-14 subfamily.

The chain is Kinesin-like protein KIN-14I from Arabidopsis thaliana (Mouse-ear cress).